A 155-amino-acid polypeptide reads, in one-letter code: Ribosome maturation factor RimP (155 aa).

The protein belongs to the RimP family.

It is found in the cytoplasm. Functionally, required for maturation of 30S ribosomal subunits. The protein is Ribosome maturation factor RimP of Listeria monocytogenes serotype 4a (strain HCC23).